Here is a 922-residue protein sequence, read N- to C-terminus: GPI inositol-deacylase (922 aa).

Residues 1-11 (MFLHSVNLWNL) are Cytoplasmic-facing. Residues 12–32 (AFYVFMVFLATLGLWDVFFGF) form a helical membrane-spanning segment. The Lumenal portion of the chain corresponds to 33 to 597 (EENKCSMSYM…GQVVRFHGGA (565 aa)). Ser174 is a catalytic residue. Asn363, Asn402, and Asn558 each carry an N-linked (GlcNAc...) asparagine glycan. The helical transmembrane segment at 598–618 (LPAYVVSSILLAYGGQLYSLL) threads the bilayer. The Cytoplasmic segment spans residues 619 to 641 (STGFCLEYGTMLDKEAKPYKVDP). A helical transmembrane segment spans residues 642-662 (FVIMIKFLLGYKWFKELWDAV). Residues 663–668 (LLPELD) lie on the Lumenal side of the membrane. Residues 669 to 689 (AIVLTSQSMCFPLVSLILFLF) form a helical membrane-spanning segment. The Cytoplasmic segment spans residues 690–694 (GTCTA). Residues 695-715 (YWSGLLSSASVQLLSSLWLAL) traverse the membrane as a helical segment. The Lumenal segment spans residues 716-733 (KRPAELPKDVKVMSPDLP). Residues 734–754 (VLTVVFLIISWTTCGALAILL) form a helical membrane-spanning segment. At 755–816 (SYLYYVFKVV…NDAEDSLRMH (62 aa)) the chain is on the cytoplasmic side. A disordered region spans residues 776-801 (NQPVNPKHSRRSEKKSNHHKDSAIQN). Over residues 782 to 793 (KHSRRSEKKSNH) the composition is skewed to basic residues. The chain crosses the membrane as a helical span at residues 817 to 837 (STVINLLTWVVLLSMPSLIYW). Over 838 to 853 (SKNLRYYFKLNPDPCK) the chain is Lumenal. A helical transmembrane segment spans residues 854–874 (PLAFLLIPAIAVLGNTHTVSI). At 875–894 (KSSKLLKTASQFPLPLAVGV) the chain is on the cytoplasmic side. A helical transmembrane segment spans residues 895–915 (IAFGSSHLYRVPCFVIIPLVF). Residues 916 to 922 (HSLCNFM) lie on the Lumenal side of the membrane.

It belongs to the GPI inositol-deacylase family.

It localises to the endoplasmic reticulum membrane. Its function is as follows. GPI inositol-deacylase that catalyzes the remove of the acyl chain linked to the 2-OH position of inositol ring from the GPI-anchored protein (GPI-AP) in the endoplasmic reticulum. Initiates the post-attachment remodeling phase of GPI-AP biogenesis and participates in endoplasmic reticulum (ER)-to-Golgi transport of GPI-anchored protein. This Rattus norvegicus (Rat) protein is GPI inositol-deacylase.